Reading from the N-terminus, the 29-residue chain is Chassatide C10 (29 aa).

The segment at residues 1–29 (GEYCGESCYLIPCFTPGCYCVSRQCVNKN) is a cross-link (cyclopeptide (Gly-Asn)). 3 cysteine pairs are disulfide-bonded: Cys4–Cys18, Cys8–Cys20, and Cys13–Cys25.

In terms of processing, this is a cyclic peptide.

Functionally, probably participates in a plant defense mechanism. Has no activity against bacteria up to a concentration of 80 uM. Has cytotoxic but no hemolytic activity. This is Chassatide C10 from Chassalia chartacea (Chassalia curviflora).